Here is a 549-residue protein sequence, read N- to C-terminus: Probable protein kinase UbiB (549 aa).

Residues 123 to 501 (DFEDTPLASA…QQKAHKSNYL (379 aa)) enclose the Protein kinase domain. ATP-binding positions include 129–137 (LASASISQV) and K152. D287 serves as the catalytic Proton acceptor. The next 2 helical transmembrane spans lie at 498–518 (SNYL…LLNQ) and 520–540 (ATLW…VLGW).

This sequence belongs to the ABC1 family. UbiB subfamily.

It is found in the cell inner membrane. It participates in cofactor biosynthesis; ubiquinone biosynthesis [regulation]. Is probably a protein kinase regulator of UbiI activity which is involved in aerobic coenzyme Q (ubiquinone) biosynthesis. This chain is Probable protein kinase UbiB, found in Shewanella piezotolerans (strain WP3 / JCM 13877).